We begin with the raw amino-acid sequence, 244 residues long: Na(+)-translocating NADH-quinone reductase subunit E (244 aa).

A run of 6 helical transmembrane segments spans residues 11–31, 50–70, 90–110, 123–143, 153–173, and 191–211; these read LLGI…TFLG, MSVA…HYFI, FLEL…LELL, GIFL…LFGI, VVFS…FATI, and ISFI…GIDI.

The protein belongs to the NqrDE/RnfAE family. Composed of six subunits; NqrA, NqrB, NqrC, NqrD, NqrE and NqrF.

The protein resides in the cell inner membrane. It catalyses the reaction a ubiquinone + n Na(+)(in) + NADH + H(+) = a ubiquinol + n Na(+)(out) + NAD(+). Functionally, NQR complex catalyzes the reduction of ubiquinone-1 to ubiquinol by two successive reactions, coupled with the transport of Na(+) ions from the cytoplasm to the periplasm. NqrA to NqrE are probably involved in the second step, the conversion of ubisemiquinone to ubiquinol. The protein is Na(+)-translocating NADH-quinone reductase subunit E of Chlamydia trachomatis serovar L2 (strain ATCC VR-902B / DSM 19102 / 434/Bu).